Reading from the N-terminus, the 498-residue chain is Diacylglycerol O-acyltransferase 1 (498 aa).

The segment at 1 to 66 (MGDRGGAGSS…AHTRDKDGRT (66 aa)) is disordered. Residues 1 to 92 (MGDRGGAGSS…SLFSSDSGFS (92 aa)) lie on the Cytoplasmic side of the membrane. The interval 1 to 100 (MGDRGGAGSS…FSNYRGILNW (100 aa)) is involved in homomerization. At serine 20 the chain carries Phosphoserine. A helical membrane pass occupies residues 93–127 (NYRGILNWCVVMLILSNARLFLENLIKYGILVDPI). Residues 128-139 (QVVSLFLKDPYS) are Lumenal-facing. Positions 128–139 (QVVSLFLKDPYS) are extracellular loop 1 (EL1). A helical transmembrane segment spans residues 140 to 165 (WPAPCVIIASNIFVVAAFQIEKRLAV). The tract at residues 140 to 498 (WPAPCVIIAS…VLNYDAPVGV (359 aa)) is MBOAT fold. Residues 166–170 (GALTE) are Cytoplasmic-facing. The chain crosses the membrane as a helical span at residues 171-193 (QMGLLLHVVNLATIICFPAAVAL). Residues 194 to 200 (LVESITP) are Lumenal-facing. A helical transmembrane segment spans residues 201 to 232 (VGSVFALASYSIMFLKLYSYRDVNLWCRQRRV). Residues 233 to 284 (KAKAVSTGKKVSGAAAQQAVSYPDNLTYRDLYYFIFAPTLCYELNFPRSPRI) lie on the Cytoplasmic side of the membrane. Residues 235–287 (KAVSTGKKVSGAAAQQAVSYPDNLTYRDLYYFIFAPTLCYELNFPRSPRIRKR) are intracellular loop 1 (IL1). The chain crosses the membrane as a helical span at residues 285–319 (RKRFLLRRVLEMLFFTQLQVGLIQQWMVPTIQNSM). The Lumenal portion of the chain corresponds to 320–326 (KPFKDMD). A helical transmembrane segment spans residues 327–364 (YSRIIERLLKLAVPNHLIWLIFFYWFFHSCLNAVAELL). The Cytoplasmic portion of the chain corresponds to 365–410 (QFGDREFYRDWWNAESVTYFWQNWNIPVHKWCIRHFYKPMLRHGSS). The interval 365–410 (QFGDREFYRDWWNAESVTYFWQNWNIPVHKWCIRHFYKPMLRHGSS) is intracellular loop 2 (IL2). Positions 371-377 (FYRDWWN) match the FYXDWWN motif motif. An acyl-CoA-binding positions include 385 to 393 (WQNWNIPVH), tyrosine 401, and arginine 415. Residues 391–405 (PVHKWCIRHFYKPML) form an amphipathic helix (AH) region. Residues 411–431 (KWVARTGVFLTSAFFHEYLVS) traverse the membrane as a helical segment. Histidine 426 is an active-site residue. Residues 432–439 (VPLRMFRL) are Lumenal-facing. Residues 440-458 (WAFTAMMAQVPLAWIVGRF) form a helical membrane-spanning segment. Residues 459–460 (FQ) lie on the Cytoplasmic side of the membrane. The helical transmembrane segment at 461–492 (GNYGNAAVWVTLIIGQPVAVLMYVHDYYVLNY) threads the bilayer. Tyrosine 488 lines the an acyl-CoA pocket. The Lumenal portion of the chain corresponds to 493-498 (DAPVGV).

It belongs to the membrane-bound acyltransferase family. Sterol o-acyltransferase subfamily. As to quaternary structure, homodimer or homotetramer; both forms have similar enzymatic activities.

The protein localises to the endoplasmic reticulum membrane. It carries out the reaction an acyl-CoA + a 1,2-diacyl-sn-glycerol = a triacyl-sn-glycerol + CoA. It catalyses the reaction all-trans-retinol + an acyl-CoA = an all-trans-retinyl ester + CoA. The catalysed reaction is 1-octadecanoyl-2-(5Z,8Z,11Z,14Z-eicosatetraenoyl)-sn-glycerol + (9Z)-octadecenoyl-CoA = 1-octadecanoyl-2-(5Z,8Z,11Z,14Z)-eicosatetraenoyl-3-(9Z)-octadecenoyl-sn-glycerol + CoA. The enzyme catalyses hexadecane-1,2-diol + 2 hexadecanoyl-CoA = 1,2-O,O-dihexadecanoyl-1,2-hexadecanediol + 2 CoA. It carries out the reaction hexadecane-1,2-diol + hexadecanoyl-CoA = 2-hydroxyhexadecyl hexadecanoate + CoA. It catalyses the reaction 2-(9Z-octadecenoyl)-glycerol + hexadecanoyl-CoA = 1-hexadecanoyl-2-(9Z-octadecenoyl)-sn-glycerol + CoA. The catalysed reaction is 1,2-di-(9Z-octadecenoyl)-sn-glycerol + hexadecanoyl-CoA = 1,2-di-(9Z)-octadecenoyl-3-hexadecanoyl-sn-glycerol + CoA. The enzyme catalyses hexadecan-1-ol + hexadecanoyl-CoA = hexadecanyl hexadecanoate + CoA. It carries out the reaction all-trans-retinol + hexadecanoyl-CoA = all-trans-retinyl hexadecanoate + CoA. It catalyses the reaction 13-cis-retinol + hexadecanoyl-CoA = 13-cis-retinyl hexadecanoate + CoA. The catalysed reaction is 1,2-di-(9Z-octadecenoyl)-sn-glycerol + (9Z)-octadecenoyl-CoA = 1,2,3-tri-(9Z-octadecenoyl)-glycerol + CoA. The enzyme catalyses 1,3-di-(9Z-octadecenoyl)-glycerol + (9Z)-octadecenoyl-CoA = 1,2,3-tri-(9Z-octadecenoyl)-glycerol + CoA. It carries out the reaction 2,3-di-(9Z)-octadecenoyl-sn-glycerol + (9Z)-octadecenoyl-CoA = 1,2,3-tri-(9Z-octadecenoyl)-glycerol + CoA. It catalyses the reaction 1-O-(9Z-octadecenyl)-glycerol + (9Z)-octadecenoyl-CoA = 1-O-(9Z-octadecyl)-3-(9Z-octadecenoyl)-glycerol + CoA. The catalysed reaction is 1-(9Z-octadecenoyl)-glycerol + (9Z)-octadecenoyl-CoA = 1,2-di-(9Z-octadecenoyl)-glycerol + CoA. The enzyme catalyses 2-(9Z-octadecenoyl)-glycerol + (9Z)-octadecenoyl-CoA = 1,2-di-(9Z-octadecenoyl)-sn-glycerol + CoA. It carries out the reaction 1-O-(9Z-octadecyl)-3-(9Z-octadecenoyl)-glycerol + (9Z)-octadecenoyl-CoA = 1-O-(9Z-octadecenyl)-2,3-di-(9Z-octadecenoyl)glycerol + CoA. It catalyses the reaction 1,2-di-(9Z-octadecenoyl)-glycerol + (9Z)-octadecenoate + H(+) = 1,2,3-tri-(9Z-octadecenoyl)-glycerol + H2O. It functions in the pathway lipid metabolism; glycerolipid metabolism. Functionally, catalyzes the terminal and only committed step in triacylglycerol synthesis by using diacylglycerol and fatty acyl CoA as substrates. Highly expressed in epithelial cells of the small intestine and its activity is essential for the absorption of dietary fats. In liver, plays a role in esterifying exogenous fatty acids to glycerol, and is required to synthesize fat for storage. Also present in female mammary glands, where it produces fat in the milk. May be involved in VLDL (very low density lipoprotein) assembly. In contrast to DGAT2 it is not essential for survival. Functions as the major acyl-CoA retinol acyltransferase (ARAT) in the skin, where it acts to maintain retinoid homeostasis and prevent retinoid toxicity leading to skin and hair disorders. Exhibits additional acyltransferase activities, includin acyl CoA:monoacylglycerol acyltransferase (MGAT), wax monoester and wax diester synthases. Also able to use 1-monoalkylglycerol (1-MAkG) as an acyl acceptor for the synthesis of monoalkyl-monoacylglycerol (MAMAG). The polypeptide is Diacylglycerol O-acyltransferase 1 (Mus musculus (Mouse)).